A 425-amino-acid chain; its full sequence is Ribulose bisphosphate carboxylase/oxygenase activase B, chloroplastic (425 aa).

Residues 1–43 constitute a chloroplast transit peptide; that stretch reads MASAFSSTVGAPASTPTIFLGKKVKNYYHGGNKMKSRVVRVMA. ATP is bound at residue 153–160; it reads GGKGQGKS.

Belongs to the RuBisCO activase family.

It localises to the plastid. It is found in the chloroplast stroma. Functionally, activation of RuBisCO (ribulose-1,5-bisphosphate carboxylase/oxygenase; EC 4.1.1.39) involves the ATP-dependent carboxylation of the epsilon-amino group of lysine leading to a carbamate structure. The sequence is that of Ribulose bisphosphate carboxylase/oxygenase activase B, chloroplastic (RCAB) from Hordeum vulgare (Barley).